The chain runs to 506 residues: MTPVVALVGRPNVGKSTLFNRLTRTRDALVADFPGLTRDRKYGHANIAGYDFIVIDTGGIDGTEEGVEEKMAEQSLLAIEEADVVLFLVDARAGLVPADIGIAQYLRQREKTTVVVANKTDGIDADSHCAEFYQLGLGEVEQIAAAQGRGVTQLIDQVLAPLGEQLNADQAVENEENSANEEADEWDTDFDFENEDDTALLDEALEEETEESIEDKNIKIAIVGRPNVGKSTLTNRILGEERVVVYDMPGTTRDSIYIPMERDGQQYTIIDTAGVRKRGKVNLAVEKFSVIKTLQAIQDANVVLLTIDAREGISDQDLSLLGFILNAGRSLVIVVNKWDGLSQDIKDQVKSELDRRLDFIDFARVHFISALHGSGVGNLFDSVKEAYACATQKNSTSMLTRILRMAADEHQPPLVNGRRVKLKYAHPGGYNPPIIVIHGNQVEKLADSYKRYLSNYFRKSLKIIGSPIRIQFQEGNNPFAGKKNKLTPSQLRKRKRLMKFIKKSKK.

2 consecutive EngA-type G domains span residues 3–166 (PVVA…GEQL) and 218–391 (IKIA…ACAT). GTP is bound by residues 9 to 16 (GRPNVGKS), 56 to 60 (DTGGI), 118 to 121 (NKTD), 224 to 231 (GRPNVGKS), 271 to 275 (DTAGV), and 336 to 339 (NKWD). The KH-like domain maps to 392–476 (QKNSTSMLTR…PIRIQFQEGN (85 aa)).

The protein belongs to the TRAFAC class TrmE-Era-EngA-EngB-Septin-like GTPase superfamily. EngA (Der) GTPase family. In terms of assembly, associates with the 50S ribosomal subunit.

Functionally, GTPase that plays an essential role in the late steps of ribosome biogenesis. In Actinobacillus pleuropneumoniae serotype 7 (strain AP76), this protein is GTPase Der.